The following is a 189-amino-acid chain: DnaJ homolog subfamily C member 5G (189 aa).

The J domain occupies S17–G98. The segment at P154–F189 is disordered. Residues K161 to P171 are compositionally biased toward polar residues.

In terms of processing, palmitoylated. Testis specific.

The protein localises to the membrane. The chain is DnaJ homolog subfamily C member 5G (DNAJC5G) from Homo sapiens (Human).